A 461-amino-acid polypeptide reads, in one-letter code: Ufm1-specific protease 2 (461 aa).

Catalysis depends on residues C294, D418, and H420.

It belongs to the peptidase C78 family.

It localises to the endoplasmic reticulum. Its subcellular location is the cytoplasm. The protein localises to the nucleus. Functionally, thiol-dependent isopeptidase that specifically cleaves UFM1, a ubiquitin-like modifier protein, from conjugated proteins, such as CD274/PD-L1, CYB5R3, DDRGK1, MRE11, RPL26/uL24, TRIP4 and RPL26/uL24. While it is also able to mediate the processing of UFM1 precursors, a prerequisite for conjugation reactions, UFSP2 mainly acts as a protein deUFMylase that mediates deconjugation of UFM1 from target proteins. Mediates deUFMylation of RPL26/uL24, a critical step to release the UFM1 ribosome E3 ligase (UREL) complex during the recycling of 60S ribosome subunits from the endoplasmic reticulum. Catalyzes deUFMylation of TRIP4, regulating intracellular nuclear receptors transactivation and thereby regulate cell proliferation and differentiation. The chain is Ufm1-specific protease 2 from Rattus norvegicus (Rat).